A 135-amino-acid chain; its full sequence is uncharacterized protein (135 aa).

This is an uncharacterized protein from Methanocaldococcus jannaschii (strain ATCC 43067 / DSM 2661 / JAL-1 / JCM 10045 / NBRC 100440) (Methanococcus jannaschii).